A 376-amino-acid chain; its full sequence is UDP-N-acetylglucosamine--N-acetylmuramyl-(pentapeptide) pyrophosphoryl-undecaprenol N-acetylglucosamine transferase (376 aa).

UDP-N-acetyl-alpha-D-glucosamine is bound by residues 11–13 (TGG), Asn-117, Arg-160, Ser-208, and Gln-310.

It belongs to the glycosyltransferase 28 family. MurG subfamily.

Its subcellular location is the cell inner membrane. The enzyme catalyses di-trans,octa-cis-undecaprenyl diphospho-N-acetyl-alpha-D-muramoyl-L-alanyl-D-glutamyl-meso-2,6-diaminopimeloyl-D-alanyl-D-alanine + UDP-N-acetyl-alpha-D-glucosamine = di-trans,octa-cis-undecaprenyl diphospho-[N-acetyl-alpha-D-glucosaminyl-(1-&gt;4)]-N-acetyl-alpha-D-muramoyl-L-alanyl-D-glutamyl-meso-2,6-diaminopimeloyl-D-alanyl-D-alanine + UDP + H(+). It functions in the pathway cell wall biogenesis; peptidoglycan biosynthesis. In terms of biological role, cell wall formation. Catalyzes the transfer of a GlcNAc subunit on undecaprenyl-pyrophosphoryl-MurNAc-pentapeptide (lipid intermediate I) to form undecaprenyl-pyrophosphoryl-MurNAc-(pentapeptide)GlcNAc (lipid intermediate II). This Rickettsia conorii (strain ATCC VR-613 / Malish 7) protein is UDP-N-acetylglucosamine--N-acetylmuramyl-(pentapeptide) pyrophosphoryl-undecaprenol N-acetylglucosamine transferase.